The following is a 1138-amino-acid chain: Phosphatidylserine decarboxylase proenzyme 2 (1138 aa).

The region spanning 1 to 122 (MRIIKGRKRG…SNSGLSSHSH (122 aa)) is the C2 1 domain. Disordered regions lie at residues 90–166 (TGAP…PGST), 269–305 (MRSSSSLPPPLEDMLSNSSAVSGNEIRREKPYSDTDL), and 413–448 (AVSENDITSVDDEESENQQESDEEFDIYNEDEREDS). The span at 98–121 (SRPRTTTANTSSSTLSNSGLSSHS) shows a compositional bias: low complexity. Positions 125-135 (RNLNVTSKGNQ) are enriched in polar residues. A compositionally biased stretch (low complexity) spans 136–166 (TSTSINSVSSSATPAPSHSSSSLSTTGPGST). Positions 293 to 305 (EIRREKPYSDTDL) are enriched in basic and acidic residues. Residues 421–448 (SVDDEESENQQESDEEFDIYNEDEREDS) are compositionally biased toward acidic residues. The C2 2 domain maps to 478–600 (RRAKSNFFIS…QQQQHENEWI (123 aa)). Residues Asp571, Ser574, and Asp577 each contribute to the Ca(2+) site. Catalysis depends on charge relay system; for autoendoproteolytic cleavage activity residues Asp899, His956, and Ser1043. Catalysis depends on Ser1043, which acts as the Schiff-base intermediate with substrate; via pyruvic acid; for decarboxylase activity. Ser1043 is modified (pyruvic acid (Ser); by autocatalysis).

Belongs to the phosphatidylserine decarboxylase family. PSD-B subfamily. Eukaryotic type II sub-subfamily. As to quaternary structure, heterodimer of a large membrane-associated beta subunit and a small pyruvoyl-containing alpha subunit. Interacts with pstB2/PDR17. This interaction may be a means to structurally tether the donor membrane (ER) harboring PstB2/PDR17 to acceptor membranes (Golgi/endosomes) harboring PSD2 during PtdSer transport to the site of PtdEtn synthesis. The cofactor is pyruvate. Ca(2+) is required as a cofactor. Post-translationally, is synthesized initially as an inactive proenzyme. Formation of the active enzyme involves a self-maturation process in which the active site pyruvoyl group is generated from an internal serine residue via an autocatalytic post-translational modification. Two non-identical subunits are generated from the proenzyme in this reaction, and the pyruvate is formed at the N-terminus of the alpha chain, which is derived from the carboxyl end of the proenzyme. The autoendoproteolytic cleavage occurs by a canonical serine protease mechanism, in which the side chain hydroxyl group of the serine supplies its oxygen atom to form the C-terminus of the beta chain, while the remainder of the serine residue undergoes an oxidative deamination to produce ammonia and the pyruvoyl prosthetic group on the alpha chain. During this reaction, the Ser that is part of the protease active site of the proenzyme becomes the pyruvoyl prosthetic group, which constitutes an essential element of the active site of the mature decarboxylase.

It localises to the golgi apparatus membrane. Its subcellular location is the endosome membrane. The enzyme catalyses a 1,2-diacyl-sn-glycero-3-phospho-L-serine + H(+) = a 1,2-diacyl-sn-glycero-3-phosphoethanolamine + CO2. It participates in phospholipid metabolism; phosphatidylethanolamine biosynthesis; phosphatidylethanolamine from CDP-diacylglycerol: step 2/2. In terms of biological role, catalyzes the formation of phosphatidylethanolamine (PtdEtn) from phosphatidylserine (PtdSer). Plays a central role in phospholipid metabolism and in the interorganelle trafficking of phosphatidylserine. Phosphatidylethanolamine produced by PSD2 is insufficient to completely provide the PtdEtn pool required by mitochondria under respiratory conditions. PSD2 is also involved in the PtdSer transport step to the site of PtdEtn synthesis on the Golgi/endosome membranes. Required for normal heavy metal resistance. In Saccharomyces cerevisiae (strain ATCC 204508 / S288c) (Baker's yeast), this protein is Phosphatidylserine decarboxylase proenzyme 2.